A 317-amino-acid polypeptide reads, in one-letter code: UDP-3-O-acylglucosamine N-acyltransferase (317 aa).

The active-site Proton acceptor is His-229.

The protein belongs to the transferase hexapeptide repeat family. LpxD subfamily. In terms of assembly, homotrimer.

It catalyses the reaction a UDP-3-O-[(3R)-3-hydroxyacyl]-alpha-D-glucosamine + a (3R)-hydroxyacyl-[ACP] = a UDP-2-N,3-O-bis[(3R)-3-hydroxyacyl]-alpha-D-glucosamine + holo-[ACP] + H(+). Its pathway is bacterial outer membrane biogenesis; LPS lipid A biosynthesis. Its function is as follows. Catalyzes the N-acylation of UDP-3-O-acylglucosamine using 3-hydroxyacyl-ACP as the acyl donor. Is involved in the biosynthesis of lipid A, a phosphorylated glycolipid that anchors the lipopolysaccharide to the outer membrane of the cell. The protein is UDP-3-O-acylglucosamine N-acyltransferase of Campylobacter curvus (strain 525.92).